The chain runs to 393 residues: Ribonuclease D (393 aa).

A 3'-5' exonuclease domain is found at 14-181; that stretch reads LITTTEDLTG…VYQLLLERLE (168 aa). The 82-residue stretch at 219–300 folds into the HRDC domain; that stretch reads NRRMLGVLRA…AAARALPDGA (82 aa).

Belongs to the RNase D family. It depends on a divalent metal cation as a cofactor.

It localises to the cytoplasm. It carries out the reaction Exonucleolytic cleavage that removes extra residues from the 3'-terminus of tRNA to produce 5'-mononucleotides.. Exonuclease involved in the 3' processing of various precursor tRNAs. Initiates hydrolysis at the 3'-terminus of an RNA molecule and releases 5'-mononucleotides. The chain is Ribonuclease D from Gluconacetobacter diazotrophicus (strain ATCC 49037 / DSM 5601 / CCUG 37298 / CIP 103539 / LMG 7603 / PAl5).